The following is a 178-amino-acid chain: Large ribosomal subunit protein uL6 (178 aa).

Belongs to the universal ribosomal protein uL6 family. As to quaternary structure, part of the 50S ribosomal subunit.

Functionally, this protein binds to the 23S rRNA, and is important in its secondary structure. It is located near the subunit interface in the base of the L7/L12 stalk, and near the tRNA binding site of the peptidyltransferase center. In Lactococcus lactis subsp. cremoris (strain SK11), this protein is Large ribosomal subunit protein uL6.